The chain runs to 87 residues: Large ribosomal subunit protein bL27 (87 aa).

Belongs to the bacterial ribosomal protein bL27 family.

The chain is Large ribosomal subunit protein bL27 from Dichelobacter nodosus (strain VCS1703A).